The primary structure comprises 335 residues: Protein STRICTOSIDINE SYNTHASE-LIKE 12 (335 aa).

The signal sequence occupies residues 1–22 (MTSFCSMISLLLLLSLSSAVFS). Asparagine 80 carries N-linked (GlcNAc...) asparagine glycosylation.

Belongs to the strictosidine synthase family.

The protein localises to the vacuole. It carries out the reaction 3alpha(S)-strictosidine + H2O = secologanin + tryptamine. Its pathway is alkaloid biosynthesis; 3alpha(S)-strictosidine biosynthesis; 3alpha(S)-strictosidine from secologanin and tryptamine: step 1/1. In terms of biological role, catalyzes the stereospecific condensation of tryptamine with secologanin to form strictosidine, the key intermediate of indole alkaloid biosynthesis. The sequence is that of Protein STRICTOSIDINE SYNTHASE-LIKE 12 from Arabidopsis thaliana (Mouse-ear cress).